Here is a 210-residue protein sequence, read N- to C-terminus: Large ribosomal subunit protein uL3 (210 aa).

Belongs to the universal ribosomal protein uL3 family. As to quaternary structure, part of the 50S ribosomal subunit. Forms a cluster with proteins L14 and L19.

Its function is as follows. One of the primary rRNA binding proteins, it binds directly near the 3'-end of the 23S rRNA, where it nucleates assembly of the 50S subunit. This is Large ribosomal subunit protein uL3 from Caldicellulosiruptor bescii (strain ATCC BAA-1888 / DSM 6725 / KCTC 15123 / Z-1320) (Anaerocellum thermophilum).